The following is a 479-amino-acid chain: FAD-dependent monooxygenase cdmI (479 aa).

Glutamate 43, glycine 57, and arginine 116 together coordinate FAD. Residues asparagine 156 and asparagine 198 are each glycosylated (N-linked (GlcNAc...) asparagine). FAD-binding residues include aspartate 315 and alanine 328. A helical membrane pass occupies residues 453-473 (PFILAVLAGLGFLLTMFKQQW).

The protein belongs to the paxM FAD-dependent monooxygenase family. FAD is required as a cofactor.

The protein localises to the membrane. The enzyme catalyses verruculide C + AH2 + O2 = verruculide C epoxide + A + H2O. It participates in secondary metabolite biosynthesis; terpenoid biosynthesis. In terms of biological role, FAD-dependent monooxygenase; part of the gene cluster that mediates the biosynthesis of chrodrimanin B, a meroterpenoid that acts as a potent blocker of insect GABA-gated chloride channels. The first step of the pathway is the biosynthesis of 6-hydroxymellein by the polyketide synthase cdmE. The prenyltransferase cdmH acts as a 6-hydroxymellein 5-farnesyltransferase and produces the hydrophobic metabolite verruculide C. The FAD-dependent monooxygenase cdmI further converts verruculide C into verruculide B. The terpene cyclase cdmG then produced the pentacyclic molecule 3-hydroxypentacecilide A, the backbone structure of chrodrimanin B, via folding the farnesyl moiety of the substrate into the chair-boat conformation. The short-chain dehydrogenase/reductase cdmF functions as the 3-OH dehydrogenase that oxidizes the C-3 hydroxyl group of 3-hydroxypentacecilide A and produces chrodrimanin C, the dehydrogenated product of 3-hydroxypentacecilide A. The cytochrome P450 monooxygenase cdmJ then accepts both 3-hydroxypentacecilide A and chrodrimanin C and functions as a C-7-beta-hydroxylase to produce respectively chrodrimanin H and chrodrimanin F. The dioxygenase cdmA accepts chrodrimanin H to afford chrodrimanin E, which is further transformed to chrodrimanin A by the dioxygenase cdmD. CdmA can also accept chrodrimanin C as substrate to convert it into verruculide A, which is further converted into chrodrimanin T by cdmD. The last step of the biosynthesis is proposed to be performed by the acetyltransferase cdmC which acetylates chrodrimanin A to yield chrodrimanin B. The pathway may also lead to the production of additional shunt products, including chrodrimanins T and U. The protein is FAD-dependent monooxygenase cdmI of Talaromyces verruculosus (Penicillium verruculosum).